Here is a 259-residue protein sequence, read N- to C-terminus: tRNA (guanine-N(7)-)-methyltransferase (259 aa).

Residues 1 to 74 (MGHHGQMHAQ…PAEDPDRPGP (74 aa)) are disordered. Residues E91, E116, N143, and D166 each coordinate S-adenosyl-L-methionine. D166 is an active-site residue. Substrate contacts are provided by residues K170, D202, and 238–241 (TKYE).

This sequence belongs to the class I-like SAM-binding methyltransferase superfamily. TrmB family.

The catalysed reaction is guanosine(46) in tRNA + S-adenosyl-L-methionine = N(7)-methylguanosine(46) in tRNA + S-adenosyl-L-homocysteine. It functions in the pathway tRNA modification; N(7)-methylguanine-tRNA biosynthesis. Its function is as follows. Catalyzes the formation of N(7)-methylguanine at position 46 (m7G46) in tRNA. The protein is tRNA (guanine-N(7)-)-methyltransferase of Mycobacterium avium (strain 104).